A 249-amino-acid chain; its full sequence is Transcription initiation factor TFIID subunit 9B (249 aa).

Met-1 is modified (N-acetylmethionine). Ser-147 carries the post-translational modification Phosphoserine. Residues 148 to 171 (AVSSRPTTPPVAPPQAVSGPNKAA) form a disordered region. Position 172 is a phosphothreonine (Thr-172). A Phosphoserine modification is found at Ser-175. A compositionally biased stretch (polar residues) spans 224 to 234 (VSSQNTATDSN). Residues 224-249 (VSSQNTATDSNPLKRKHDDDDDNDTM) are disordered.

Belongs to the TAF9 family. As to quaternary structure, binds TAF5 and TAF6. Component of TFIID and the TATA-binding protein-free TAF complex (TFTC). TFIID is composed of TATA binding protein (TBP) and a number of TBP-associated factors (TAFs). Binds N-terminal domain of p53/TP53 which is essential for transcription.

It is found in the nucleus. Its function is as follows. Essential for cell viability. TAF9 and TAF9B are involved in transcriptional activation as well as repression of distinct but overlapping sets of genes. May have a role in gene regulation associated with apoptosis. TAFs are components of the transcription factor IID (TFIID) complex, the TBP-free TAFII complex (TFTC), the PCAF histone acetylase complex and the STAGA transcription coactivator-HAT complex. TFIID or TFTC are essential for the regulation of RNA polymerase II-mediated transcription. In Mus musculus (Mouse), this protein is Transcription initiation factor TFIID subunit 9B (Taf9b).